Reading from the N-terminus, the 193-residue chain is Shikimate kinase (193 aa).

31 to 36 provides a ligand contact to ATP; sequence GVGKTT. T35 contacts Mg(2+). Substrate is bound by residues D53, R77, and G103. R141 serves as a coordination point for ATP. Residue R160 participates in substrate binding. Q176 provides a ligand contact to ATP.

The protein belongs to the shikimate kinase family. As to quaternary structure, monomer. The cofactor is Mg(2+).

The protein localises to the cytoplasm. The enzyme catalyses shikimate + ATP = 3-phosphoshikimate + ADP + H(+). Its pathway is metabolic intermediate biosynthesis; chorismate biosynthesis; chorismate from D-erythrose 4-phosphate and phosphoenolpyruvate: step 5/7. Its function is as follows. Catalyzes the specific phosphorylation of the 3-hydroxyl group of shikimic acid using ATP as a cosubstrate. In Novosphingobium aromaticivorans (strain ATCC 700278 / DSM 12444 / CCUG 56034 / CIP 105152 / NBRC 16084 / F199), this protein is Shikimate kinase.